The following is an 87-amino-acid chain: Small ribosomal subunit protein bS20 (87 aa).

The disordered stretch occupies residues 1-26; that stretch reads MANHKSAIKRHKQSQKRAARNRAAKT.

This sequence belongs to the bacterial ribosomal protein bS20 family.

In terms of biological role, binds directly to 16S ribosomal RNA. The chain is Small ribosomal subunit protein bS20 from Nitratidesulfovibrio vulgaris (strain DSM 19637 / Miyazaki F) (Desulfovibrio vulgaris).